Reading from the N-terminus, the 76-residue chain is Putative membrane protein insertion efficiency factor (76 aa).

It belongs to the UPF0161 family.

It is found in the cell inner membrane. Functionally, could be involved in insertion of integral membrane proteins into the membrane. The polypeptide is Putative membrane protein insertion efficiency factor (Porphyromonas gingivalis (strain ATCC 33277 / DSM 20709 / CIP 103683 / JCM 12257 / NCTC 11834 / 2561)).